A 76-amino-acid chain; its full sequence is Putative protein StbC (76 aa).

This Escherichia coli protein is Putative protein StbC (stbC).